A 581-amino-acid chain; its full sequence is Proline--tRNA ligase (581 aa).

This sequence belongs to the class-II aminoacyl-tRNA synthetase family. ProS type 1 subfamily. In terms of assembly, homodimer.

It localises to the cytoplasm. The catalysed reaction is tRNA(Pro) + L-proline + ATP = L-prolyl-tRNA(Pro) + AMP + diphosphate. Its function is as follows. Catalyzes the attachment of proline to tRNA(Pro) in a two-step reaction: proline is first activated by ATP to form Pro-AMP and then transferred to the acceptor end of tRNA(Pro). As ProRS can inadvertently accommodate and process non-cognate amino acids such as alanine and cysteine, to avoid such errors it has two additional distinct editing activities against alanine. One activity is designated as 'pretransfer' editing and involves the tRNA(Pro)-independent hydrolysis of activated Ala-AMP. The other activity is designated 'posttransfer' editing and involves deacylation of mischarged Ala-tRNA(Pro). The misacylated Cys-tRNA(Pro) is not edited by ProRS. The polypeptide is Proline--tRNA ligase (Polaromonas naphthalenivorans (strain CJ2)).